A 337-amino-acid polypeptide reads, in one-letter code: tRNA N6-adenosine threonylcarbamoyltransferase (337 aa).

2 residues coordinate Fe cation: His111 and His115. Substrate-binding positions include Leu134–Gly138, Asp167, Gly180, and Asn272. Position 300 (Asp300) interacts with Fe cation.

It belongs to the KAE1 / TsaD family. Fe(2+) serves as cofactor.

It is found in the cytoplasm. The catalysed reaction is L-threonylcarbamoyladenylate + adenosine(37) in tRNA = N(6)-L-threonylcarbamoyladenosine(37) in tRNA + AMP + H(+). Required for the formation of a threonylcarbamoyl group on adenosine at position 37 (t(6)A37) in tRNAs that read codons beginning with adenine. Is involved in the transfer of the threonylcarbamoyl moiety of threonylcarbamoyl-AMP (TC-AMP) to the N6 group of A37, together with TsaE and TsaB. TsaD likely plays a direct catalytic role in this reaction. In Shewanella amazonensis (strain ATCC BAA-1098 / SB2B), this protein is tRNA N6-adenosine threonylcarbamoyltransferase.